The sequence spans 295 residues: Hepatic leukemia factor (295 aa).

The span at 36 to 52 (PEDAFSKEKDKGKKLDD) shows a compositional bias: basic and acidic residues. 2 disordered regions span residues 36–76 (PEDA…TLPY) and 92–149 (LSEN…SPIR). Residues 225–288 (DDKYWARRRK…GKCKNILAKY (64 aa)) enclose the bZIP domain. The segment at 227–247 (KYWARRRKNNMAAKRSRDARR) is basic motif. Positions 248–255 (LKENQIAI) are leucine-zipper.

This sequence belongs to the bZIP family. PAR subfamily. In terms of assembly, binds DNA specifically as homodimer or heterodimer with other PAR factors.

The protein localises to the nucleus. This Mus musculus (Mouse) protein is Hepatic leukemia factor (Hlf).